The chain runs to 83 residues: MRLFLSLPVLVVVLSMVLEGPAPAQGAPEVSNPFDGLEELGKTLEDNTQELINRITQSELPAKMWDWFSETFRKVKEKLKIDS.

Residues 1–26 (MRLFLSLPVLVVVLSMVLEGPAPAQG) form the signal peptide.

This sequence belongs to the apolipoprotein C1 family.

The protein resides in the secreted. The chain is Apolipoprotein C-I, acidic form (APOC1A) from Gorilla gorilla gorilla (Western lowland gorilla).